A 330-amino-acid polypeptide reads, in one-letter code: MKVFYDSDFKLDALKEKTIAVIGYGSQGRAQSLNMKDSGLNVVVGLRKNGASWNNAKADGHNVMTIEEAAEKADIIHILIPDELQAEVYESQIKPYLKEGKTLSFSHGFNIHYGFIVPPKGVNVVLVAPKSPGKMVRRTYEEGFGVPGLICIEIDATNNAFDIVSAMAKGIGLSRAGVIQTTFKEETETDLFGEQAVLCGGVTELIKAGFETLVEAGYAPEMAYFETCHELKLIVDLIYQKGFKNMWNDVSNTAEYGGLTRRSRIVTADSKAAMKEILREIQDGRFTKEFLLEKQVSYAHLKSMRRLEGDLQIEEVGAKLRKMCGLEKEE.

The region spanning 1–181 (MKVFYDSDFK…GLSRAGVIQT (181 aa)) is the KARI N-terminal Rossmann domain. Residues 24-27 (YGSQ), Arg47, Ser52, and 82-85 (DELQ) each bind NADP(+). The active site involves His107. Residue Gly133 coordinates NADP(+). Residues 182–327 (TFKEETETDL…AKLRKMCGLE (146 aa)) form the KARI C-terminal knotted domain. 4 residues coordinate Mg(2+): Asp190, Glu194, Glu226, and Glu230. Ser251 contributes to the substrate binding site.

It belongs to the ketol-acid reductoisomerase family. Requires Mg(2+) as cofactor.

The enzyme catalyses (2R)-2,3-dihydroxy-3-methylbutanoate + NADP(+) = (2S)-2-acetolactate + NADPH + H(+). It carries out the reaction (2R,3R)-2,3-dihydroxy-3-methylpentanoate + NADP(+) = (S)-2-ethyl-2-hydroxy-3-oxobutanoate + NADPH + H(+). It functions in the pathway amino-acid biosynthesis; L-isoleucine biosynthesis; L-isoleucine from 2-oxobutanoate: step 2/4. It participates in amino-acid biosynthesis; L-valine biosynthesis; L-valine from pyruvate: step 2/4. Functionally, involved in the biosynthesis of branched-chain amino acids (BCAA). Catalyzes an alkyl-migration followed by a ketol-acid reduction of (S)-2-acetolactate (S2AL) to yield (R)-2,3-dihydroxy-isovalerate. In the isomerase reaction, S2AL is rearranged via a Mg-dependent methyl migration to produce 3-hydroxy-3-methyl-2-ketobutyrate (HMKB). In the reductase reaction, this 2-ketoacid undergoes a metal-dependent reduction by NADPH to yield (R)-2,3-dihydroxy-isovalerate. In Methanococcus maripaludis (strain DSM 14266 / JCM 13030 / NBRC 101832 / S2 / LL), this protein is Ketol-acid reductoisomerase (NADP(+)).